The sequence spans 78 residues: Colicin-V immunity protein (78 aa).

This protein is able to protect a cell, which harbors the plasmid ColV encoding colicin V, against colicin V. In Escherichia coli, this protein is Colicin-V immunity protein (cvi).